The sequence spans 463 residues: tRNA-2-methylthio-N(6)-dimethylallyladenosine synthase (463 aa).

The MTTase N-terminal domain maps to 19–135; sequence GSYWITTFGC…LESLLNQVDS (117 aa). [4Fe-4S] cluster contacts are provided by Cys-28, Cys-64, Cys-98, Cys-170, Cys-174, and Cys-177. The Radical SAM core domain maps to 156–393; that stretch reads RDSSFCGWVN…NSLVENIAKE (238 aa). In terms of domain architecture, TRAM spans 396-463; the sequence is QRYKNTSQEI…RPFSLTAKLL (68 aa).

This sequence belongs to the methylthiotransferase family. MiaB subfamily. As to quaternary structure, monomer. Requires [4Fe-4S] cluster as cofactor.

The protein resides in the cytoplasm. The enzyme catalyses N(6)-dimethylallyladenosine(37) in tRNA + (sulfur carrier)-SH + AH2 + 2 S-adenosyl-L-methionine = 2-methylsulfanyl-N(6)-dimethylallyladenosine(37) in tRNA + (sulfur carrier)-H + 5'-deoxyadenosine + L-methionine + A + S-adenosyl-L-homocysteine + 2 H(+). Catalyzes the methylthiolation of N6-(dimethylallyl)adenosine (i(6)A), leading to the formation of 2-methylthio-N6-(dimethylallyl)adenosine (ms(2)i(6)A) at position 37 in tRNAs that read codons beginning with uridine. This chain is tRNA-2-methylthio-N(6)-dimethylallyladenosine synthase, found in Prochlorococcus marinus (strain NATL1A).